The primary structure comprises 544 residues: CTP synthase (544 aa).

The amidoligase domain stretch occupies residues 1 to 265 (MTKFIFVTGG…DNIITEQLQL (265 aa)). S13 serves as a coordination point for CTP. S13 serves as a coordination point for UTP. Residues 14–19 (SLGKGI) and D71 each bind ATP. Positions 71 and 139 each coordinate Mg(2+). Residues 146–148 (DIE), 186–191 (KTKPTQ), and K222 contribute to the CTP site. UTP contacts are provided by residues 186–191 (KTKPTQ) and K222. The 255-residue stretch at 290 to 544 (KIAMVGKYVD…VKAALNNKKA (255 aa)) folds into the Glutamine amidotransferase type-1 domain. G353 provides a ligand contact to L-glutamine. C380 acts as the Nucleophile; for glutamine hydrolysis in catalysis. Residues 381–384 (LGMQ), E404, and R471 contribute to the L-glutamine site. Catalysis depends on residues H517 and E519.

The protein belongs to the CTP synthase family. Homotetramer.

The enzyme catalyses UTP + L-glutamine + ATP + H2O = CTP + L-glutamate + ADP + phosphate + 2 H(+). The catalysed reaction is L-glutamine + H2O = L-glutamate + NH4(+). It carries out the reaction UTP + NH4(+) + ATP = CTP + ADP + phosphate + 2 H(+). Its pathway is pyrimidine metabolism; CTP biosynthesis via de novo pathway; CTP from UDP: step 2/2. Its activity is regulated as follows. Allosterically activated by GTP, when glutamine is the substrate; GTP has no effect on the reaction when ammonia is the substrate. The allosteric effector GTP functions by stabilizing the protein conformation that binds the tetrahedral intermediate(s) formed during glutamine hydrolysis. Inhibited by the product CTP, via allosteric rather than competitive inhibition. Its function is as follows. Catalyzes the ATP-dependent amination of UTP to CTP with either L-glutamine or ammonia as the source of nitrogen. Regulates intracellular CTP levels through interactions with the four ribonucleotide triphosphates. The protein is CTP synthase of Neisseria meningitidis serogroup B (strain ATCC BAA-335 / MC58).